Consider the following 129-residue polypeptide: uncharacterized protein (129 aa).

2 consecutive C2H2-type zinc fingers follow at residues 75-99 (FVCP…YTEH) and 101-124 (KVCP…CKKH).

Functionally, essential for virus function. This is an uncharacterized protein from Saccharolobus solfataricus (Sulfolobus solfataricus).